A 352-amino-acid polypeptide reads, in one-letter code: Molybdenum import ATP-binding protein ModC (352 aa).

Positions 1–229 constitute an ABC transporter domain; sequence MLELNFSQTL…SVMNPWLPKE (229 aa). 31 to 38 serves as a coordination point for ATP; sequence GVSGAGKT. The Mop domain occupies 289–352; sequence QTSIRNVLRA…AQIKSVSITA (64 aa).

Belongs to the ABC transporter superfamily. Molybdate importer (TC 3.A.1.8) family. As to quaternary structure, the complex is composed of two ATP-binding proteins (ModC), two transmembrane proteins (ModB) and a solute-binding protein (ModA).

It localises to the cell inner membrane. It carries out the reaction molybdate(out) + ATP + H2O = molybdate(in) + ADP + phosphate + H(+). Functionally, part of the ABC transporter complex ModABC involved in molybdenum import. Responsible for energy coupling to the transport system. The protein is Molybdenum import ATP-binding protein ModC of Shigella boydii serotype 4 (strain Sb227).